The sequence spans 273 residues: Ribosomal RNA small subunit methyltransferase A (273 aa).

The S-adenosyl-L-methionine site is built by Asn17, Leu19, Gly44, Glu65, and Asn111.

It belongs to the class I-like SAM-binding methyltransferase superfamily. rRNA adenine N(6)-methyltransferase family. RsmA subfamily.

It is found in the cytoplasm. It carries out the reaction adenosine(1518)/adenosine(1519) in 16S rRNA + 4 S-adenosyl-L-methionine = N(6)-dimethyladenosine(1518)/N(6)-dimethyladenosine(1519) in 16S rRNA + 4 S-adenosyl-L-homocysteine + 4 H(+). Its function is as follows. Specifically dimethylates two adjacent adenosines (A1518 and A1519) in the loop of a conserved hairpin near the 3'-end of 16S rRNA in the 30S particle. May play a critical role in biogenesis of 30S subunits. The protein is Ribosomal RNA small subunit methyltransferase A of Buchnera aphidicola subsp. Acyrthosiphon pisum (strain APS) (Acyrthosiphon pisum symbiotic bacterium).